The primary structure comprises 113 residues: U11-theraphotoxin-Hhn1a (113 aa).

Residues 1 to 21 (MNTVRVTFLLVFVLAVSLGQA) form the signal peptide. Positions 22-74 (DKDENRMEMQEKTEQGNSYLDFAENLPLQKLEELEAKLLEEDSEESRNSRQKR) are excised as a propeptide. Basic and acidic residues predominate over residues 60–69 (LEEDSEESRN). The tract at residues 60-83 (LEEDSEESRNSRQKRCIGEGVPCD) is disordered. Intrachain disulfides connect C75–C90, C82–C95, and C89–C110.

It belongs to the neurotoxin 14 (magi-1) family. 01 (HNTX-16) subfamily. In terms of tissue distribution, expressed by the venom gland.

Its subcellular location is the secreted. Probable ion channel inhibitor. This chain is U11-theraphotoxin-Hhn1a, found in Cyriopagopus hainanus (Chinese bird spider).